Consider the following 255-residue polypeptide: Leucyl/phenylalanyl-tRNA--protein transferase (255 aa).

The protein belongs to the L/F-transferase family.

It is found in the cytoplasm. The catalysed reaction is N-terminal L-lysyl-[protein] + L-leucyl-tRNA(Leu) = N-terminal L-leucyl-L-lysyl-[protein] + tRNA(Leu) + H(+). It catalyses the reaction N-terminal L-arginyl-[protein] + L-leucyl-tRNA(Leu) = N-terminal L-leucyl-L-arginyl-[protein] + tRNA(Leu) + H(+). It carries out the reaction L-phenylalanyl-tRNA(Phe) + an N-terminal L-alpha-aminoacyl-[protein] = an N-terminal L-phenylalanyl-L-alpha-aminoacyl-[protein] + tRNA(Phe). In terms of biological role, functions in the N-end rule pathway of protein degradation where it conjugates Leu, Phe and, less efficiently, Met from aminoacyl-tRNAs to the N-termini of proteins containing an N-terminal arginine or lysine. The sequence is that of Leucyl/phenylalanyl-tRNA--protein transferase from Burkholderia thailandensis (strain ATCC 700388 / DSM 13276 / CCUG 48851 / CIP 106301 / E264).